Here is a 156-residue protein sequence, read N- to C-terminus: S-ribosylhomocysteine lyase (156 aa).

Positions 53, 57, and 122 each coordinate Fe cation.

It belongs to the LuxS family. Homodimer. Requires Fe cation as cofactor.

It catalyses the reaction S-(5-deoxy-D-ribos-5-yl)-L-homocysteine = (S)-4,5-dihydroxypentane-2,3-dione + L-homocysteine. Functionally, involved in the synthesis of autoinducer 2 (AI-2) which is secreted by bacteria and is used to communicate both the cell density and the metabolic potential of the environment. The regulation of gene expression in response to changes in cell density is called quorum sensing. Catalyzes the transformation of S-ribosylhomocysteine (RHC) to homocysteine (HC) and 4,5-dihydroxy-2,3-pentadione (DPD). This Finegoldia magna (strain ATCC 29328 / DSM 20472 / WAL 2508) (Peptostreptococcus magnus) protein is S-ribosylhomocysteine lyase.